Consider the following 132-residue polypeptide: uncharacterized protein (132 aa).

This is an uncharacterized protein from Archaeoglobus fulgidus (strain ATCC 49558 / DSM 4304 / JCM 9628 / NBRC 100126 / VC-16).